Reading from the N-terminus, the 117-residue chain is uncharacterized protein (117 aa).

This is an uncharacterized protein from Sinorhizobium fredii (strain NBRC 101917 / NGR234).